The chain runs to 123 residues: Small ribosomal subunit protein uS12 (123 aa).

A 3-methylthioaspartic acid modification is found at D89. Residues 100-123 are disordered; the sequence is GSLDTSGVKGRNQGRSKYGTKRPK. Residues 111–123 show a composition bias toward basic residues; sequence NQGRSKYGTKRPK.

It belongs to the universal ribosomal protein uS12 family. In terms of assembly, part of the 30S ribosomal subunit. Contacts proteins S8 and S17. May interact with IF1 in the 30S initiation complex.

With S4 and S5 plays an important role in translational accuracy. Functionally, interacts with and stabilizes bases of the 16S rRNA that are involved in tRNA selection in the A site and with the mRNA backbone. Located at the interface of the 30S and 50S subunits, it traverses the body of the 30S subunit contacting proteins on the other side and probably holding the rRNA structure together. The combined cluster of proteins S8, S12 and S17 appears to hold together the shoulder and platform of the 30S subunit. The chain is Small ribosomal subunit protein uS12 from Pseudomonas fluorescens (strain ATCC BAA-477 / NRRL B-23932 / Pf-5).